The sequence spans 471 residues: Cytochrome b-c1 complex subunit 1, mitochondrial (471 aa).

It belongs to the peptidase M16 family.

Its subcellular location is the mitochondrion matrix. In Caenorhabditis elegans, this protein is Cytochrome b-c1 complex subunit 1, mitochondrial (ucr-1).